The following is a 643-amino-acid chain: Phosphomethylpyrimidine synthase (643 aa).

Substrate contacts are provided by residues N248, M277, Y306, H342, 362–364, 403–406, and E442; these read SRG and DGLR. H446 serves as a coordination point for Zn(2+). Y469 contributes to the substrate binding site. Position 510 (H510) interacts with Zn(2+). 3 residues coordinate [4Fe-4S] cluster: C590, C593, and C598.

Belongs to the ThiC family. In terms of assembly, homodimer. It depends on [4Fe-4S] cluster as a cofactor.

The catalysed reaction is 5-amino-1-(5-phospho-beta-D-ribosyl)imidazole + S-adenosyl-L-methionine = 4-amino-2-methyl-5-(phosphooxymethyl)pyrimidine + CO + 5'-deoxyadenosine + formate + L-methionine + 3 H(+). It functions in the pathway cofactor biosynthesis; thiamine diphosphate biosynthesis. Catalyzes the synthesis of the hydroxymethylpyrimidine phosphate (HMP-P) moiety of thiamine from aminoimidazole ribotide (AIR) in a radical S-adenosyl-L-methionine (SAM)-dependent reaction. This Burkholderia ambifaria (strain MC40-6) protein is Phosphomethylpyrimidine synthase.